Consider the following 420-residue polypeptide: Gamma-glutamyl phosphate reductase (420 aa).

Belongs to the gamma-glutamyl phosphate reductase family.

It is found in the cytoplasm. It catalyses the reaction L-glutamate 5-semialdehyde + phosphate + NADP(+) = L-glutamyl 5-phosphate + NADPH + H(+). It participates in amino-acid biosynthesis; L-proline biosynthesis; L-glutamate 5-semialdehyde from L-glutamate: step 2/2. In terms of biological role, catalyzes the NADPH-dependent reduction of L-glutamate 5-phosphate into L-glutamate 5-semialdehyde and phosphate. The product spontaneously undergoes cyclization to form 1-pyrroline-5-carboxylate. The protein is Gamma-glutamyl phosphate reductase of Shewanella denitrificans (strain OS217 / ATCC BAA-1090 / DSM 15013).